The chain runs to 227 residues: 2,3-bisphosphoglycerate-dependent phosphoglycerate mutase (227 aa).

Residues R7–N14, T20–G21, R59, E86–Y89, K97, R113–R114, and G182–N183 each bind substrate. H8 serves as the catalytic Tele-phosphohistidine intermediate. Catalysis depends on E86, which acts as the Proton donor/acceptor.

It belongs to the phosphoglycerate mutase family. BPG-dependent PGAM subfamily. Homodimer.

It carries out the reaction (2R)-2-phosphoglycerate = (2R)-3-phosphoglycerate. It functions in the pathway carbohydrate degradation; glycolysis; pyruvate from D-glyceraldehyde 3-phosphate: step 3/5. In terms of biological role, catalyzes the interconversion of 2-phosphoglycerate and 3-phosphoglycerate. The protein is 2,3-bisphosphoglycerate-dependent phosphoglycerate mutase of Neisseria meningitidis serogroup A / serotype 4A (strain DSM 15465 / Z2491).